Reading from the N-terminus, the 563-residue chain is CTP synthase (563 aa).

Residues 1–278 form an amidoligase domain region; the sequence is MAKATAKNSA…DLRVLEQLHL (278 aa). Ser-24 contributes to the CTP binding site. A UTP-binding site is contributed by Ser-24. An ATP-binding site is contributed by 25 to 30; sequence SLGKGI. Residue Tyr-65 participates in L-glutamine binding. Asp-82 lines the ATP pocket. 2 residues coordinate Mg(2+): Asp-82 and Glu-151. CTP-binding positions include 158-160, 198-203, and Lys-234; these read DIE and KTKPSQ. UTP contacts are provided by residues 198 to 203 and Lys-234; that span reads KTKPSQ. 250–252 serves as a coordination point for ATP; it reads KDV. A Glutamine amidotransferase type-1 domain is found at 303–545; that stretch reads TIALVGKYIA…VKAALEQKKA (243 aa). Gly-363 is a binding site for L-glutamine. The Nucleophile; for glutamine hydrolysis role is filled by Cys-390. L-glutamine-binding positions include 391-394, Glu-414, and Arg-471; that span reads LGMQ. Residues His-518 and Glu-520 contribute to the active site. Residues 542–563 are disordered; sequence QKKANGKKPTAPSEKTKKTKTK.

It belongs to the CTP synthase family. In terms of assembly, homotetramer.

The enzyme catalyses UTP + L-glutamine + ATP + H2O = CTP + L-glutamate + ADP + phosphate + 2 H(+). It catalyses the reaction L-glutamine + H2O = L-glutamate + NH4(+). The catalysed reaction is UTP + NH4(+) + ATP = CTP + ADP + phosphate + 2 H(+). Its pathway is pyrimidine metabolism; CTP biosynthesis via de novo pathway; CTP from UDP: step 2/2. With respect to regulation, allosterically activated by GTP, when glutamine is the substrate; GTP has no effect on the reaction when ammonia is the substrate. The allosteric effector GTP functions by stabilizing the protein conformation that binds the tetrahedral intermediate(s) formed during glutamine hydrolysis. Inhibited by the product CTP, via allosteric rather than competitive inhibition. Catalyzes the ATP-dependent amination of UTP to CTP with either L-glutamine or ammonia as the source of nitrogen. Regulates intracellular CTP levels through interactions with the four ribonucleotide triphosphates. This chain is CTP synthase, found in Fibrobacter succinogenes (strain ATCC 19169 / S85).